A 225-amino-acid chain; its full sequence is Ribonuclease 3 (225 aa).

The RNase III domain occupies 5 to 127 (LERLQRQIGY…IIGAISLDSD (123 aa)). Residue Glu40 coordinates Mg(2+). Asp44 is a catalytic residue. Mg(2+) contacts are provided by Asp113 and Glu116. Residue Glu116 is part of the active site. One can recognise a DRBM domain in the interval 154 to 224 (DPKTRLQEYL…AEKILQLLEM (71 aa)).

It belongs to the ribonuclease III family. Homodimer. The cofactor is Mg(2+).

The protein localises to the cytoplasm. It catalyses the reaction Endonucleolytic cleavage to 5'-phosphomonoester.. Digests double-stranded RNA. Involved in the processing of primary rRNA transcript to yield the immediate precursors to the large and small rRNAs (23S and 16S). Also processes some mRNAs, and tRNAs when they are encoded in the rRNA operon. In terms of biological role, CRISPR (clustered regularly interspaced short palindromic repeat) is an adaptive immune system that provides protection against mobile genetic elements (viruses, transposable elements and conjugative plasmids). CRISPR clusters contain spacers, sequences complementary to antecedent mobile elements, and target invading nucleic acids. CRISPR clusters are transcribed and processed into CRISPR RNA (crRNA). In this organism endogenous ribonuclease 3 and Cas9 are required for correct coprocessing of pre-crRNA and the trans-encoded small RNA (tracrRNA). Cas9, crRNA and tracrRNA are required for cleavage of invading DNA. Complements pre-crRNA and tracrRNA coprocessing defects in an rnc deletion in S.pyogenes strain 370. The sequence is that of Ribonuclease 3 from Pasteurella multocida (strain Pm70).